Here is a 96-residue protein sequence, read N- to C-terminus: Plasminogen-like protein A (96 aa).

Positions 1–19 are cleaved as a signal peptide; it reads MEHKEVVLLLLLFLKSGQG. The PAN domain occupies 20-96; the sequence is EPLDDYVNAQ…RMRDVVLFEK (77 aa). Intrachain disulfides connect cysteine 49–cysteine 73 and cysteine 53–cysteine 61.

Expressed in liver.

Its subcellular location is the secreted. Functionally, may bind non-covalently to lysine binding sites present in the kringle structures of plasminogen. This may interfere with the binding of fibrin or alpha-2-antiplasmin to plasminogen and may result in the localization of activity at sites necessary for extracellular matrix destruction. The sequence is that of Plasminogen-like protein A (PLGLA) from Homo sapiens (Human).